We begin with the raw amino-acid sequence, 151 residues long: Protein SprT-like (151 aa).

Residues 6–147 form the SprT-like domain; it reads LQRMVENLSE…GHCNGKLRMK (142 aa). His-67 lines the Zn(2+) pocket. Residue Glu-68 is part of the active site. Residue His-71 coordinates Zn(2+).

The protein belongs to the SprT family. It depends on Zn(2+) as a cofactor.

The protein resides in the cytoplasm. The protein is Protein SprT-like of Staphylococcus aureus (strain Mu3 / ATCC 700698).